A 610-amino-acid chain; its full sequence is MQRDFRWLWVYEIGYAADNSRTLNVDSTAMTLPMSDPTAWATAMNNLGMAPLGIAGQPILPDFDPALGMMTGIPPITPMMPGLGIVPPPIPPDMPVVKEIIHCKSCTLFPPNPNLPPPATRERPPGCKTVFVGGLPENGTEQIIVEVFEQCGEIIAIRKSKKNFCHIRFAEEYMVDKALYLSGYRIRLGSSTDKKDTGRLHVDFAQARDDLYEWECKQRMLAREERHRRRMEEERLRPPSPPPVVHYSDHECSIVAEKLKDDSKFSEAVQTLLTWIERGEVNRRSANNFYSMIQSANSHVRRLVNEKAAHEKDMEEAKEKFKQALSGILIQFEQIVAVYHSASKQKAWDHFTKAQRKNISVWCKQAEEIRNIHNDELMGIRREEEMEMSDDEIEEMTETKETEESALVSQAEALKEENDSLRWQLDAYRNEVELLKQEQGKVHREDDPNKEQQLKLLQQALQGMQQHLLKVQEEYKKKEAELEKLKDDKLQVEKMLENLKEKESCASRLCASNQDSEYPLEKTMNSSPIKSEREALLVGIISTFLHVHPFGASIEYICSYLHRLDNKICTSDVECLMGRLQHTFKQEMTGVGASLEKRWKFCGFEGLKLT.

Residues 128–207 (KTVFVGGLPE…GRLHVDFAQA (80 aa)) form the RRM domain. 2 coiled-coil regions span residues 293-328 (IQSA…LSGI) and 381-505 (RREE…KESC).

Belongs to the ENOX family. It depends on Cu cation as a cofactor. Post-translationally, glycosylated. As to expression, found in the sera of cancer patients with a wide variety of cancers including breast, prostate, lung and ovarian cancers, leukemias, and lymphomas. Not found in the serum of healthy volunteers or patients with disorders other than cancer. Probably shed into serum by cancer cells. Found on the cell borders of renal, kidney and ovarian carcinomas but not on the borders of surrounding non-cancerous stromal cells.

Its subcellular location is the cell membrane. The protein resides in the secreted. It localises to the extracellular space. With respect to regulation, inhibited by the antitumor sulfonylurea LY181984, the vabilloid capsaicin, and retinoids. Its function is as follows. May be involved in cell growth. Probably acts as a terminal oxidase of plasma electron transport from cytosolic NAD(P)H via hydroquinones to acceptors at the cell surface. Hydroquinone oxidase activity alternates with a protein disulfide-thiol interchange/oxidoreductase activity which may control physical membrane displacements associated with vesicle budding or cell enlargement. The activities oscillate with a period length of 22 minutes and play a role in control of the ultradian cellular biological clock. The chain is Ecto-NOX disulfide-thiol exchanger 2 (ENOX2) from Homo sapiens (Human).